The sequence spans 330 residues: Calponin-3 (330 aa).

An N6-acetyllysine modification is found at K23. Residues 26–130 (QQAEEDLRNW…TLVALAGLAK (105 aa)) enclose the Calponin-homology (CH) domain. K158 is modified (N6-methyllysine). Calponin-like repeat units lie at residues 164-189 (IGLQMGTNKCASQAGMTAYGTRRHLY), 204-229 (ISLQMGTNKGASQAGMSAPGTRRDIY), and 243-268 (ISLQMGTNKVASQKGMSVYGLGRQVY). Residues 279 to 330 (PVIHNGSQGTGTNGSEISDSDYQAEYPDEYHGEYPDEYPREYQYGDDQGIDY) form a disordered region. The span at 306–318 (DEYHGEYPDEYPR) shows a compositional bias: basic and acidic residues.

The protein belongs to the calponin family.

Functionally, thin filament-associated protein that is implicated in the regulation and modulation of smooth muscle contraction. It is capable of binding to actin, calmodulin and tropomyosin. The interaction of calponin with actin inhibits the actomyosin Mg-ATPase activity. This is Calponin-3 (Cnn3) from Rattus norvegicus (Rat).